The chain runs to 184 residues: Shikimate kinase (184 aa).

Residue 17-22 participates in ATP binding; sequence GAGKTT. Residue T21 participates in Mg(2+) binding. Residues D39, R63, and G85 each coordinate substrate. R123 provides a ligand contact to ATP. R142 contributes to the substrate binding site.

Belongs to the shikimate kinase family. As to quaternary structure, monomer. Requires Mg(2+) as cofactor.

The protein localises to the cytoplasm. It carries out the reaction shikimate + ATP = 3-phosphoshikimate + ADP + H(+). It functions in the pathway metabolic intermediate biosynthesis; chorismate biosynthesis; chorismate from D-erythrose 4-phosphate and phosphoenolpyruvate: step 5/7. Functionally, catalyzes the specific phosphorylation of the 3-hydroxyl group of shikimic acid using ATP as a cosubstrate. This Burkholderia pseudomallei (strain 1710b) protein is Shikimate kinase.